The sequence spans 348 residues: Maintenance of mitochondrial morphology protein 1 (348 aa).

Topologically, residues 1–35 (MAGKADLGHTGISDNIVERQIFVPQPNNAWSFTQG) are lumenal. Residues 36 to 56 (LMCGQASVVVVLLVFIKFFVF) traverse the membrane as a helical segment. The Cytoplasmic segment spans residues 57–348 (SEAPPSSGAA…GKTEKVNGNE (292 aa)). Residues 114 to 323 (NPESLDWFNV…EPKFQVVRLP (210 aa)) enclose the SMP-LTD domain. The disordered stretch occupies residues 328 to 348 (RSKNTREPVGAGKTEKVNGNE).

Belongs to the MMM1 family. In terms of assembly, homodimer. Component of the ER-mitochondria encounter structure (ERMES) or MDM complex, composed of MMM1, MDM10, MDM12 and MDM34. An MMM1 homodimer associates with one molecule of MDM12 on each side in a pairwise head-to-tail manner, and the SMP-LTD domains of MMM1 and MDM12 generate a continuous hydrophobic tunnel for phospholipid trafficking.

The protein localises to the endoplasmic reticulum membrane. Its function is as follows. Component of the ERMES/MDM complex, which serves as a molecular tether to connect the endoplasmic reticulum (ER) and mitochondria. Components of this complex are involved in the control of mitochondrial shape and protein biogenesis, and function in nonvesicular lipid trafficking between the ER and mitochondria. The MDM12-MMM1 subcomplex functions in the major beta-barrel assembly pathway that is responsible for biogenesis of all outer membrane beta-barrel proteins, and acts in a late step after the SAM complex. The MDM10-MDM12-MMM1 subcomplex further acts in the TOM40-specific pathway after the action of the MDM12-MMM1 complex. Essential for establishing and maintaining the structure of mitochondria and maintenance of mtDNA nucleoids. This is Maintenance of mitochondrial morphology protein 1 from Clavispora lusitaniae (strain ATCC 42720) (Yeast).